Consider the following 257-residue polypeptide: UPF0246 protein BF3795 (257 aa).

It belongs to the UPF0246 family.

This chain is UPF0246 protein BF3795, found in Bacteroides fragilis (strain ATCC 25285 / DSM 2151 / CCUG 4856 / JCM 11019 / LMG 10263 / NCTC 9343 / Onslow / VPI 2553 / EN-2).